The following is a 453-amino-acid chain: Phosphomannomutase (453 aa).

Serine 96 (phosphoserine intermediate) is an active-site residue. 4 residues coordinate Mg(2+): serine 96, aspartate 243, aspartate 245, and aspartate 247.

It belongs to the phosphohexose mutase family. Requires Mg(2+) as cofactor.

The enzyme catalyses alpha-D-mannose 1-phosphate = D-mannose 6-phosphate. Its pathway is nucleotide-sugar biosynthesis; GDP-alpha-D-mannose biosynthesis; alpha-D-mannose 1-phosphate from D-fructose 6-phosphate: step 2/2. The protein operates within bacterial outer membrane biogenesis; LPS O-antigen biosynthesis. Involved in GDP-mannose biosynthesis which serves as the activated sugar nucleotide precursor for mannose residues in cell surface polysaccharides. This enzyme participates in synthesis of the LPS O7 antigen. The protein is Phosphomannomutase (manB) of Escherichia coli.